We begin with the raw amino-acid sequence, 435 residues long: Histidine--tRNA ligase (435 aa).

The protein belongs to the class-II aminoacyl-tRNA synthetase family. In terms of assembly, homodimer.

It is found in the cytoplasm. The enzyme catalyses tRNA(His) + L-histidine + ATP = L-histidyl-tRNA(His) + AMP + diphosphate + H(+). This chain is Histidine--tRNA ligase, found in Synechococcus elongatus (strain ATCC 33912 / PCC 7942 / FACHB-805) (Anacystis nidulans R2).